A 401-amino-acid polypeptide reads, in one-letter code: 4-hydroxy-3-methylbut-2-en-1-yl diphosphate synthase (ferredoxin) (401 aa).

Positions 306, 309, 340, and 347 each coordinate [4Fe-4S] cluster.

This sequence belongs to the IspG family. It depends on [4Fe-4S] cluster as a cofactor.

The catalysed reaction is (2E)-4-hydroxy-3-methylbut-2-enyl diphosphate + 2 oxidized [2Fe-2S]-[ferredoxin] + H2O = 2-C-methyl-D-erythritol 2,4-cyclic diphosphate + 2 reduced [2Fe-2S]-[ferredoxin] + H(+). Its pathway is isoprenoid biosynthesis; isopentenyl diphosphate biosynthesis via DXP pathway; isopentenyl diphosphate from 1-deoxy-D-xylulose 5-phosphate: step 5/6. In terms of biological role, converts 2C-methyl-D-erythritol 2,4-cyclodiphosphate (ME-2,4cPP) into 1-hydroxy-2-methyl-2-(E)-butenyl 4-diphosphate. This is 4-hydroxy-3-methylbut-2-en-1-yl diphosphate synthase (ferredoxin) from Synechococcus sp. (strain CC9902).